A 552-amino-acid chain; its full sequence is Urocanate hydratase (552 aa).

NAD(+) is bound by residues 49 to 50, glutamine 127, 173 to 175, aspartate 193, 239 to 240, 260 to 264, 270 to 271, and tyrosine 319; these read GG, GMG, NA, QTSAH, and YI. Cysteine 407 is an active-site residue. Residue glycine 489 participates in NAD(+) binding.

This sequence belongs to the urocanase family. The cofactor is NAD(+).

The protein localises to the cytoplasm. It carries out the reaction 4-imidazolone-5-propanoate = trans-urocanate + H2O. It participates in amino-acid degradation; L-histidine degradation into L-glutamate; N-formimidoyl-L-glutamate from L-histidine: step 2/3. Functionally, catalyzes the conversion of urocanate to 4-imidazolone-5-propionate. In Bacillus cereus (strain ATCC 14579 / DSM 31 / CCUG 7414 / JCM 2152 / NBRC 15305 / NCIMB 9373 / NCTC 2599 / NRRL B-3711), this protein is Urocanate hydratase.